A 429-amino-acid polypeptide reads, in one-letter code: Adenylosuccinate synthetase (429 aa).

GTP-binding positions include glycine 12–lysine 18 and glycine 40–threonine 42. Aspartate 13 serves as the catalytic Proton acceptor. Residues aspartate 13 and glycine 40 each contribute to the Mg(2+) site. IMP contacts are provided by residues aspartate 13–lysine 16, asparagine 38–histidine 41, threonine 128, arginine 142, glutamine 223, threonine 238, and arginine 302. Residue histidine 41 is the Proton donor of the active site. Valine 298–arginine 304 serves as a coordination point for substrate. GTP contacts are provided by residues arginine 304, lysine 330–aspartate 332, and glycine 412–glycine 414.

This sequence belongs to the adenylosuccinate synthetase family. Homodimer. Requires Mg(2+) as cofactor.

Its subcellular location is the cytoplasm. It carries out the reaction IMP + L-aspartate + GTP = N(6)-(1,2-dicarboxyethyl)-AMP + GDP + phosphate + 2 H(+). Its pathway is purine metabolism; AMP biosynthesis via de novo pathway; AMP from IMP: step 1/2. Plays an important role in the de novo pathway of purine nucleotide biosynthesis. Catalyzes the first committed step in the biosynthesis of AMP from IMP. The polypeptide is Adenylosuccinate synthetase (Renibacterium salmoninarum (strain ATCC 33209 / DSM 20767 / JCM 11484 / NBRC 15589 / NCIMB 2235)).